We begin with the raw amino-acid sequence, 159 residues long: Ribosomal RNA large subunit methyltransferase H (159 aa).

Residues Leu76, Gly108, and 127–132 (FSKMTF) each bind S-adenosyl-L-methionine.

This sequence belongs to the RNA methyltransferase RlmH family. In terms of assembly, homodimer.

The protein resides in the cytoplasm. It catalyses the reaction pseudouridine(1915) in 23S rRNA + S-adenosyl-L-methionine = N(3)-methylpseudouridine(1915) in 23S rRNA + S-adenosyl-L-homocysteine + H(+). Functionally, specifically methylates the pseudouridine at position 1915 (m3Psi1915) in 23S rRNA. This Clostridium novyi (strain NT) protein is Ribosomal RNA large subunit methyltransferase H.